A 201-amino-acid chain; its full sequence is Small ribosomal subunit protein uS4 (201 aa).

Positions 93-153 (QRLDNIVYRL…EKSKNLVIIK (61 aa)) constitute an S4 RNA-binding domain.

Belongs to the universal ribosomal protein uS4 family. Part of the 30S ribosomal subunit. Contacts protein S5. The interaction surface between S4 and S5 is involved in control of translational fidelity.

In terms of biological role, one of the primary rRNA binding proteins, it binds directly to 16S rRNA where it nucleates assembly of the body of the 30S subunit. Its function is as follows. With S5 and S12 plays an important role in translational accuracy. This chain is Small ribosomal subunit protein uS4, found in Latilactobacillus sakei subsp. sakei (strain 23K) (Lactobacillus sakei subsp. sakei).